The sequence spans 243 residues: Protein IN2-1 homolog A (243 aa).

A GST N-terminal domain is found at 31 to 112; it reads GTTRLYICYF…YIDSHFEGPA (82 aa). Residues Lys-70, Val-84, and 96–97 contribute to the glutathione site; that span reads ES. The 124-residue stretch at 117 to 240 folds into the GST C-terminal domain; sequence DPEKRQFADE…YLLDLAKTHL (124 aa).

The protein belongs to the GST superfamily. HSP26 family.

The protein is Protein IN2-1 homolog A of Oryza sativa subsp. japonica (Rice).